The sequence spans 201 residues: Small ribosomal subunit protein uS4c (201 aa).

A disordered region spans residues 20-39 (GLTRKTPKSGSNLKKKFHSG). Residues 89–150 (MRLDNILFRL…NQRSKRLVQN (62 aa)) enclose the S4 RNA-binding domain.

This sequence belongs to the universal ribosomal protein uS4 family. In terms of assembly, part of the 30S ribosomal subunit. Contacts protein S5. The interaction surface between S4 and S5 is involved in control of translational fidelity.

It is found in the plastid. The protein localises to the chloroplast. Functionally, one of the primary rRNA binding proteins, it binds directly to 16S rRNA where it nucleates assembly of the body of the 30S subunit. With S5 and S12 plays an important role in translational accuracy. In Oryza nivara (Indian wild rice), this protein is Small ribosomal subunit protein uS4c (rps4).